Consider the following 336-residue polypeptide: Dihydroorotate dehydrogenase (quinone) (336 aa).

FMN contacts are provided by residues 62–66 (AGLDK) and Thr86. Substrate is bound at residue Lys66. Residue 111–115 (NRMGF) coordinates substrate. Residues Asn139 and Asn172 each coordinate FMN. Asn172 contacts substrate. The active-site Nucleophile is Ser175. Asn177 contacts substrate. Residues Lys217 and Thr245 each coordinate FMN. 246–247 (NT) is a binding site for substrate. FMN-binding positions include Gly268, Gly297, and 318–319 (YS).

Belongs to the dihydroorotate dehydrogenase family. Type 2 subfamily. Monomer. It depends on FMN as a cofactor.

Its subcellular location is the cell membrane. The catalysed reaction is (S)-dihydroorotate + a quinone = orotate + a quinol. The protein operates within pyrimidine metabolism; UMP biosynthesis via de novo pathway; orotate from (S)-dihydroorotate (quinone route): step 1/1. In terms of biological role, catalyzes the conversion of dihydroorotate to orotate with quinone as electron acceptor. This is Dihydroorotate dehydrogenase (quinone) from Salmonella gallinarum (strain 287/91 / NCTC 13346).